The sequence spans 277 residues: Large ribosomal subunit protein uL2 (277 aa).

Residues 220–277 are disordered; sequence VRGSVMNPNDHPHGGGEGKAPIGRPSPMSPWGKKTLGKKTRSSKARSEKLIIRHRKSR. A compositionally biased stretch (basic residues) spans 254–263; it reads TLGKKTRSSK.

Belongs to the universal ribosomal protein uL2 family. Part of the 50S ribosomal subunit. Forms a bridge to the 30S subunit in the 70S ribosome.

In terms of biological role, one of the primary rRNA binding proteins. Required for association of the 30S and 50S subunits to form the 70S ribosome, for tRNA binding and peptide bond formation. It has been suggested to have peptidyltransferase activity; this is somewhat controversial. Makes several contacts with the 16S rRNA in the 70S ribosome. The polypeptide is Large ribosomal subunit protein uL2 (Latilactobacillus sakei subsp. sakei (strain 23K) (Lactobacillus sakei subsp. sakei)).